The primary structure comprises 512 residues: MTSETVLEIRNVSKHFGAVKALTAVDFRLARGEVHALCGENGAGKSTLMNVIAGVLQPSEGEVLIEGAPVKIASPAVAQSLGIALVHQEIALCPDATIAENMFMAATNRRRSALMNYAQLERDAQAVMNRLAPIDVSQKVGDLPISSQQLVEIAKALTLDCRVLIFDEPTAALTETEAQVLFGIIRDLKARGISIIYISHRMAEVFSLCDRVTVFRDGRYVATEMVSDVTPDDVVRLMVGREISQLYPDKQPSSERLGEPILSVRDLGGERFRDVSFELRYGEILGVGGLIGSGRTEIAEGICALRPVTQGEIRLHDKVLRLRRYSDAAKAGVVYLSEDRKGSGVFLDLSIAQNIAALDLKALTSLGLLNSREERALAEDLTRRLGVRMGGVDMPVSSLSGGNQQKVAIAKQLAVDPKVILMDEPTRGIDVGAKSEIHRLLRELARAGIGILVISSELPELIGLCDRVLVVREGRIAGEVSGNEMTEEVIMRLASGIGPATETNLKASGHAA.

ABC transporter domains lie at 7 to 242 and 257 to 498; these read LEIR…VGRE and LGEP…SGIG. Residue 39 to 46 participates in ATP binding; that stretch reads GENGAGKS.

This sequence belongs to the ABC transporter superfamily. Ribose importer (TC 3.A.1.2.1) family. As to quaternary structure, the complex is composed of an ATP-binding protein (RbsA), two transmembrane proteins (RbsC) and a solute-binding protein (RbsB).

It localises to the cell inner membrane. It catalyses the reaction D-ribose(out) + ATP + H2O = D-ribose(in) + ADP + phosphate + H(+). In terms of biological role, part of the ABC transporter complex RbsABC involved in ribose import. Responsible for energy coupling to the transport system. This is Ribose import ATP-binding protein RbsA 2 from Rhizobium meliloti (strain 1021) (Ensifer meliloti).